The sequence spans 155 residues: Protein SprT-like (155 aa).

A SprT-like domain is found at 7–144 (QRHMEEVSLQ…CGSCGGKLKQ (138 aa)). Position 67 (histidine 67) interacts with Zn(2+). Glutamate 68 is an active-site residue. Zn(2+) is bound at residue histidine 71.

It belongs to the SprT family. Zn(2+) serves as cofactor.

It is found in the cytoplasm. This Listeria welshimeri serovar 6b (strain ATCC 35897 / DSM 20650 / CCUG 15529 / CIP 8149 / NCTC 11857 / SLCC 5334 / V8) protein is Protein SprT-like.